A 183-amino-acid polypeptide reads, in one-letter code: Ferritin heavy polypeptide-like 17 (183 aa).

One can recognise a Ferritin-like diiron domain in the interval 11–160; it reads QKYDTNCDAA…GYVSNLRKIC (150 aa). E28, H66, E108, and Q142 together coordinate Fe cation.

This sequence belongs to the ferritin family. As to expression, testis specific. Also expressed in several cancers.

In Homo sapiens (Human), this protein is Ferritin heavy polypeptide-like 17 (FTHL17).